A 536-amino-acid polypeptide reads, in one-letter code: Glutamate--tRNA ligase, mitochondrial (536 aa).

48 to 50 (RFA) is a binding site for L-glutamate. The 'HIGH' region motif lies at 53 to 61 (PTGFLHLGS). His-58 contributes to the ATP binding site. Residues Glu-84, 235-239 (YHLAN), and Arg-253 contribute to the L-glutamate site. Residues Glu-256 and 291-295 (KLSKR) each bind ATP. Residues 291-295 (KLSKR) carry the 'KMSKS' region motif.

This sequence belongs to the class-I aminoacyl-tRNA synthetase family. Glutamate--tRNA ligase type 1 subfamily.

Its subcellular location is the mitochondrion matrix. It catalyses the reaction tRNA(Glu) + L-glutamate + ATP = L-glutamyl-tRNA(Glu) + AMP + diphosphate. Its function is as follows. Catalyzes the attachment of glutamate to tRNA(Glu) in a two-step reaction: glutamate is first activated by ATP to form Glu-AMP and then transferred to the acceptor end of tRNA(Glu). The chain is Glutamate--tRNA ligase, mitochondrial (MSE1) from Saccharomyces cerevisiae (strain ATCC 204508 / S288c) (Baker's yeast).